The following is a 178-amino-acid chain: ATP synthase subunit delta (178 aa).

The protein belongs to the ATPase delta chain family. As to quaternary structure, F-type ATPases have 2 components, F(1) - the catalytic core - and F(0) - the membrane proton channel. F(1) has five subunits: alpha(3), beta(3), gamma(1), delta(1), epsilon(1). F(0) has three main subunits: a(1), b(2) and c(10-14). The alpha and beta chains form an alternating ring which encloses part of the gamma chain. F(1) is attached to F(0) by a central stalk formed by the gamma and epsilon chains, while a peripheral stalk is formed by the delta and b chains.

It is found in the cell inner membrane. F(1)F(0) ATP synthase produces ATP from ADP in the presence of a proton or sodium gradient. F-type ATPases consist of two structural domains, F(1) containing the extramembraneous catalytic core and F(0) containing the membrane proton channel, linked together by a central stalk and a peripheral stalk. During catalysis, ATP synthesis in the catalytic domain of F(1) is coupled via a rotary mechanism of the central stalk subunits to proton translocation. In terms of biological role, this protein is part of the stalk that links CF(0) to CF(1). It either transmits conformational changes from CF(0) to CF(1) or is implicated in proton conduction. The polypeptide is ATP synthase subunit delta (Teredinibacter turnerae (strain ATCC 39867 / T7901)).